A 300-amino-acid polypeptide reads, in one-letter code: Ribosomal protein bS6--L-glutamate ligase (300 aa).

Positions 104-287 constitute an ATP-grasp domain; sequence MQLLARQGID…IAGKMIRWIE (184 aa). ATP-binding positions include lysine 141, 178 to 179, aspartate 187, and 211 to 213; these read EY and RSN. Mg(2+) contacts are provided by aspartate 248, glutamate 260, and asparagine 262. Residues aspartate 248, glutamate 260, and asparagine 262 each coordinate Mn(2+).

This sequence belongs to the RimK family. Mg(2+) serves as cofactor. The cofactor is Mn(2+).

An L-glutamate ligase that catalyzes the ATP-dependent post-translational addition of glutamate residues to the C-terminus of ribosomal protein bS6 (RpsF). Is also able to catalyze the synthesis of poly-alpha-glutamate in vitro, via ATP hydrolysis from unprotected glutamate as substrate. The number of glutamate residues added to either RpsF or to poly-alpha-glutamate changes with pH. In Shigella dysenteriae serotype 1 (strain Sd197), this protein is Ribosomal protein bS6--L-glutamate ligase.